Here is a 203-residue protein sequence, read N- to C-terminus: Small ribosomal subunit protein uS4c (203 aa).

Positions 91 to 154 constitute an S4 RNA-binding domain; sequence MRLDNIIFRL…KYESIISKNI (64 aa).

The protein belongs to the universal ribosomal protein uS4 family. In terms of assembly, part of the 30S ribosomal subunit. Contacts protein S5. The interaction surface between S4 and S5 is involved in control of translational fidelity.

It is found in the plastid. Its subcellular location is the chloroplast. Functionally, one of the primary rRNA binding proteins, it binds directly to 16S rRNA where it nucleates assembly of the body of the 30S subunit. In terms of biological role, with S5 and S12 plays an important role in translational accuracy. This Lopidium struthiopteris (Moss) protein is Small ribosomal subunit protein uS4c (rps4).